The sequence spans 312 residues: Dehydrogenase/reductase SDR family member 7C (312 aa).

Positions 1–18 (MGVMAMLMLPLLLLGISG) are cleaved as a signal peptide. Residues S47, L49, Y192, K196, and S227 each contribute to the NAD(+) site. Y192 (proton acceptor) is an active-site residue.

This sequence belongs to the short-chain dehydrogenases/reductases (SDR) family.

The protein resides in the sarcoplasmic reticulum membrane. It carries out the reaction all-trans-retinol + NAD(+) = all-trans-retinal + NADH + H(+). NADH-dependent oxidoreductase which catalyzes the oxidation of all-trans-retinol to all-trans-retinal. Plays a role in the regulation of cardiac and skeletal muscle metabolic functions. Maintains Ca(2+) intracellular homeostasis by repressing Ca(2+) release from the sarcoplasmic reticulum (SR) in myotubes, possibly through local alternations in NAD/NADH or retinol/retinal. Also plays a role in Ca(2+) homeostasis by controlling Ca(2+) overload in the cytosol and the SR in myotubes. Involved in glucose uptake into skeletal muscles and muscle performance by activating PI3K and mTORC2-mediated AKT1 phosphorylation signaling pathways, possibly through the action of its downstream catalytic product all-trans-retinoic acid. The chain is Dehydrogenase/reductase SDR family member 7C from Homo sapiens (Human).